Here is a 316-residue protein sequence, read N- to C-terminus: Protoheme IX farnesyltransferase (316 aa).

9 helical membrane passes run 32 to 52, 53 to 73, 93 to 113, 116 to 136, 152 to 172, 180 to 200, 221 to 241, 252 to 271, and 289 to 309; these read VMSLVVFTAFAGLVLAPGHIH, PVLGLIAILCIAVGAGASGAL, IPAGRIAPSEALAFGLVLSGF, VILGLAVNWLSAGILAFTIFF, NIVIGGAAGAFPPMIGWACVT, TVLFLIIFLWTPAHFWALALF, VTKHQIVAYAVLTAVCGILPS, LVAAALGAIFIYCSIAVWRM, and IFYLFAVFSALMIDRLASIFV.

This sequence belongs to the UbiA prenyltransferase family. Protoheme IX farnesyltransferase subfamily.

It is found in the cell inner membrane. The enzyme catalyses heme b + (2E,6E)-farnesyl diphosphate + H2O = Fe(II)-heme o + diphosphate. The protein operates within porphyrin-containing compound metabolism; heme O biosynthesis; heme O from protoheme: step 1/1. Converts heme B (protoheme IX) to heme O by substitution of the vinyl group on carbon 2 of heme B porphyrin ring with a hydroxyethyl farnesyl side group. This Rhizobium leguminosarum bv. trifolii (strain WSM2304) protein is Protoheme IX farnesyltransferase.